Consider the following 279-residue polypeptide: MTPMKKQLDKSLGSRRGATATRAKERADNRNTGPAAIVRLLAFIPWNRVLLHVSIFCFWLLVLSALIAGVKWLDRPVATVQVVGELNYVSRGEVKELLSPLLHASFFTSDLEGVRKSLEAHPWVKRASISRLWPDAVQVDLEEEEPFVRWRNQGYINEAGRLFVKETGVVVNGLPALIGPPHSERLVFDNFQKWKAELAKVGLDVNGVIMESRGAWLISFTDGWELNLGKQDVEGRLHRFTVLFEKKLHQEREKIASVDARYTRGVAVKWKADVTPEQG.

The interval 1 to 28 (MTPMKKQLDKSLGSRRGATATRAKERAD) is disordered. At 1-48 (MTPMKKQLDKSLGSRRGATATRAKERADNRNTGPAAIVRLLAFIPWNR) the chain is on the cytoplasmic side. Residues 49–69 (VLLHVSIFCFWLLVLSALIAG) traverse the membrane as a helical segment. The Periplasmic portion of the chain corresponds to 70–279 (VKWLDRPVAT…WKADVTPEQG (210 aa)). The 70-residue stretch at 75-144 (RPVATVQVVG…DAVQVDLEEE (70 aa)) folds into the POTRA domain.

This sequence belongs to the FtsQ/DivIB family. FtsQ subfamily. Part of a complex composed of FtsB, FtsL and FtsQ.

The protein resides in the cell inner membrane. Its function is as follows. Essential cell division protein. May link together the upstream cell division proteins, which are predominantly cytoplasmic, with the downstream cell division proteins, which are predominantly periplasmic. May control correct divisome assembly. In Hahella chejuensis (strain KCTC 2396), this protein is Cell division protein FtsQ.